A 65-amino-acid polypeptide reads, in one-letter code: Toxin AaHIT4 (65 aa).

In terms of domain architecture, LCN-type CS-alpha/beta spans 1-64 (EHGYLLNKYT…LWNYKTNKCD (64 aa)). Disulfide bonds link cysteine 12-cysteine 63, cysteine 16-cysteine 38, cysteine 23-cysteine 45, and cysteine 27-cysteine 47.

It belongs to the long (4 C-C) scorpion toxin superfamily. Sodium channel inhibitor family. As to expression, expressed by the venom gland.

It is found in the secreted. Functionally, has a toxic effect on insects and mammals and is capable of competing with anti-insect scorpion toxins for binding to the sodium channel (Nav) of insects. It also modulates the binding of alpha-type and beta-type anti-mammal scorpion toxins to the mammal sodium channel. It may act on both site 3 and site 4 of voltage-gated sodium channels. This Androctonus australis (Sahara scorpion) protein is Toxin AaHIT4.